The primary structure comprises 559 residues: Cytochrome P450 86B1 (559 aa).

The chain crosses the membrane as a helical span at residues 31–51; the sequence is FLLRDVQILELLIAIFVFVAI. Cysteine 488 is a heme binding site.

The protein belongs to the cytochrome P450 family. The cofactor is heme. As to expression, expressed in roots endodermis, anthers, stigmas, stomata of young pedicels of inflorescences, the placenta region of siliques, at the level of the hilum in matures seeds, at the junction of siliques to pedicels where abscission of floral parts takes place and in nectary glands.

It is found in the endoplasmic reticulum membrane. Involved in very long chain fatty acids (VLCFA) omega-hydroxylation. Required for the synthesis of saturated VLCFA alpha, omega-bifunctional suberin monomers. This is Cytochrome P450 86B1 (CYP86B1) from Arabidopsis thaliana (Mouse-ear cress).